A 477-amino-acid chain; its full sequence is RNA pseudouridine synthase 4, mitochondrial (477 aa).

A mitochondrion-targeting transit peptide spans 1–43 (MAKWRLATATLRRQLQSSSPTISTFKNPTKALSAAAHQSTRSY). The interval 34–55 (AAAHQSTRSYSTTQTDDSRGKW) is disordered. Residues 36-48 (AHQSTRSYSTTQT) show a composition bias toward polar residues. Residues 90–175 (TTALRWILRC…AKKESFQCSD (86 aa)) form the S4 RNA-binding domain. Aspartate 236 is an active-site residue.

It belongs to the pseudouridine synthase RluA family.

The protein localises to the mitochondrion. The catalysed reaction is a uridine in RNA = a pseudouridine in RNA. The chain is RNA pseudouridine synthase 4, mitochondrial from Arabidopsis thaliana (Mouse-ear cress).